Reading from the N-terminus, the 302-residue chain is Lipoyl synthase (302 aa).

[4Fe-4S] cluster is bound by residues cysteine 44, cysteine 49, cysteine 55, cysteine 70, cysteine 74, cysteine 77, and serine 283. A Radical SAM core domain is found at 56–272 (WSKKHATVMI…ARVAKSKGFL (217 aa)).

It belongs to the radical SAM superfamily. Lipoyl synthase family. [4Fe-4S] cluster is required as a cofactor.

The protein resides in the cytoplasm. It carries out the reaction [[Fe-S] cluster scaffold protein carrying a second [4Fe-4S](2+) cluster] + N(6)-octanoyl-L-lysyl-[protein] + 2 oxidized [2Fe-2S]-[ferredoxin] + 2 S-adenosyl-L-methionine + 4 H(+) = [[Fe-S] cluster scaffold protein] + N(6)-[(R)-dihydrolipoyl]-L-lysyl-[protein] + 4 Fe(3+) + 2 hydrogen sulfide + 2 5'-deoxyadenosine + 2 L-methionine + 2 reduced [2Fe-2S]-[ferredoxin]. Its pathway is protein modification; protein lipoylation via endogenous pathway; protein N(6)-(lipoyl)lysine from octanoyl-[acyl-carrier-protein]: step 2/2. Catalyzes the radical-mediated insertion of two sulfur atoms into the C-6 and C-8 positions of the octanoyl moiety bound to the lipoyl domains of lipoate-dependent enzymes, thereby converting the octanoylated domains into lipoylated derivatives. The polypeptide is Lipoyl synthase (Orientia tsutsugamushi (strain Ikeda) (Rickettsia tsutsugamushi)).